A 490-amino-acid chain; its full sequence is ATP synthase subunit beta, chloroplastic (490 aa).

170–177 (GGAGVGKT) provides a ligand contact to ATP.

This sequence belongs to the ATPase alpha/beta chains family. As to quaternary structure, F-type ATPases have 2 components, CF(1) - the catalytic core - and CF(0) - the membrane proton channel. CF(1) has five subunits: alpha(3), beta(3), gamma(1), delta(1), epsilon(1). CF(0) has four main subunits: a(1), b(1), b'(1) and c(9-12).

It is found in the plastid. It localises to the chloroplast thylakoid membrane. The enzyme catalyses ATP + H2O + 4 H(+)(in) = ADP + phosphate + 5 H(+)(out). Produces ATP from ADP in the presence of a proton gradient across the membrane. The catalytic sites are hosted primarily by the beta subunits. In Convolvulus arvensis (Field bindweed), this protein is ATP synthase subunit beta, chloroplastic.